We begin with the raw amino-acid sequence, 456 residues long: Enolase (456 aa).

Gln-169 contacts (2R)-2-phosphoglycerate. Glu-211 acts as the Proton donor in catalysis. Mg(2+)-binding residues include Asp-252, Glu-314, and Asp-341. Residues Lys-366, Arg-395, Ser-396, and Lys-417 each coordinate (2R)-2-phosphoglycerate. Lys-366 acts as the Proton acceptor in catalysis.

The protein belongs to the enolase family. It depends on Mg(2+) as a cofactor.

It is found in the cytoplasm. The protein localises to the secreted. Its subcellular location is the cell surface. The enzyme catalyses (2R)-2-phosphoglycerate = phosphoenolpyruvate + H2O. Its pathway is carbohydrate degradation; glycolysis; pyruvate from D-glyceraldehyde 3-phosphate: step 4/5. Functionally, catalyzes the reversible conversion of 2-phosphoglycerate (2-PG) into phosphoenolpyruvate (PEP). It is essential for the degradation of carbohydrates via glycolysis. The polypeptide is Enolase (Metamycoplasma arthritidis (strain 158L3-1) (Mycoplasma arthritidis)).